Reading from the N-terminus, the 282-residue chain is tRNA (guanine-N(1)-)-methyltransferase (282 aa).

S-adenosyl-L-methionine-binding positions include Gly157 and 177–182 (VGDYIL).

The protein belongs to the RNA methyltransferase TrmD family. As to quaternary structure, homodimer.

The protein localises to the cytoplasm. The enzyme catalyses guanosine(37) in tRNA + S-adenosyl-L-methionine = N(1)-methylguanosine(37) in tRNA + S-adenosyl-L-homocysteine + H(+). In terms of biological role, specifically methylates guanosine-37 in various tRNAs. In Rickettsia bellii (strain RML369-C), this protein is tRNA (guanine-N(1)-)-methyltransferase.